The primary structure comprises 199 residues: Thymidine kinase (199 aa).

Residues 15 to 22 and 88 to 91 contribute to the ATP site; these read GSMFSGKS and DEVQ. The active-site Proton acceptor is Glu-89. Residues Cys-145, Cys-148, Cys-183, and His-186 each contribute to the Zn(2+) site.

It belongs to the thymidine kinase family. In terms of assembly, homotetramer.

The protein resides in the cytoplasm. It catalyses the reaction thymidine + ATP = dTMP + ADP + H(+). The polypeptide is Thymidine kinase (Staphylococcus aureus (strain USA300)).